A 576-amino-acid polypeptide reads, in one-letter code: Colicin-E7 (576 aa).

Disordered stretches follow at residues 1–75 (MSGG…GGGS), 421–478 (SSAL…PVPD), and 506–557 (DPEL…GVYD). Positions 19 to 35 (NINGGPTGLGGNGGASD) are enriched in gly residues. Over residues 36–45 (GSGWSSENNP) the composition is skewed to low complexity. The span at 46-75 (WGGGSGSGVHWGGGSGHGNGGGNSNSGGGS) shows a compositional bias: gly residues. Composition is skewed to basic and acidic residues over residues 424-447 (LERR…ESKR) and 535-548 (SGKR…HEKP). Zn(2+)-binding residues include His544, His569, and His573.

It belongs to the colicin/pyosin nuclease family.

Its function is as follows. This plasmid-coded bactericidal protein is an endonuclease active on both single- and double-stranded DNA but with undefined specificity. Colicins are polypeptide toxins produced by and active against E.coli and closely related bacteria. The sequence is that of Colicin-E7 (colE7) from Escherichia coli.